The primary structure comprises 251 residues: MISYEYPLSERIRTLLRLEDLFRKVAHFGGSEAPLDHHVALLTIFEILEVASRADLKVDLVQELERQRQILLSFRNNPEISEEALAGALYEIEQASTALLSMAGKIGQYLRENEWLMGIRSRAAIPGGVCQFDLPSYHFWLNRDAAERRHDLDAWIMPMTPIRDGIEIVMRLLRSSGRPEQQRARAGTYQLTMAGRVAQMLRVRIPRSEAVVPEISANKYALNIRFMLPETVARPRVAEREITFELTFCTL.

Belongs to the ZapD family. Interacts with FtsZ.

Its subcellular location is the cytoplasm. Cell division factor that enhances FtsZ-ring assembly. Directly interacts with FtsZ and promotes bundling of FtsZ protofilaments, with a reduction in FtsZ GTPase activity. In Azoarcus sp. (strain BH72), this protein is Cell division protein ZapD.